Reading from the N-terminus, the 143-residue chain is Large ribosomal subunit protein uL13c (143 aa).

The protein belongs to the universal ribosomal protein uL13 family. Part of the 50S ribosomal subunit.

The protein localises to the plastid. It is found in the chloroplast. This is Large ribosomal subunit protein uL13c from Guillardia theta (Cryptophyte).